The chain runs to 456 residues: Protein COBRA (456 aa).

The N-terminal stretch at 1 to 36 is a signal peptide; sequence MESFFSRSTSIVSKLSFLALWIVFLISSSSFTSTEA. 9 N-linked (GlcNAc...) asparagine glycosylation sites follow: Asn-45, Asn-170, Asn-178, Asn-217, Asn-242, Asn-258, Asn-328, Asn-343, and Asn-362. Residue Asn-431 is the site of GPI-anchor amidated asparagine attachment. Positions 432 to 456 are cleaved as a propeptide — removed in mature form; that stretch reads GGSRSQFSFVAAVLLPLLVFFFFSA.

Belongs to the COBRA family. Expressed in roots, stems, leaves, flowers and siliques. Up-regulated in the root zone of rapid longitudinal expansion.

Its subcellular location is the lateral cell membrane. In terms of biological role, involved in determining the orientation of cell expansion, probably by playing an important role in cellulose deposition. May act by recruiting cellulose synthesizing complexes to discrete positions on the cell surface. The chain is Protein COBRA (COB) from Arabidopsis thaliana (Mouse-ear cress).